The chain runs to 173 residues: MIDADGFRANVGIILANTQGQVLWAKRIGHNAWQFPQGGIDRGETPMDAMYRELWEEVGLHPRHVDLLAVTQDWLRYRLPKRYVRHGQYPLCIGQKQKWFLLRLDEPNTQHIRFDEGKAEFDNWQWVSYWYPLGQVIHFKRGVYRRALQELVPELPLQQGLIIPEQNNHLLQF.

A Nudix hydrolase domain is found at Gly6 to Gln149. Residues Gly38 to Gly59 carry the Nudix box motif.

The protein belongs to the Nudix hydrolase family. RppH subfamily. The cofactor is a divalent metal cation.

Its function is as follows. Accelerates the degradation of transcripts by removing pyrophosphate from the 5'-end of triphosphorylated RNA, leading to a more labile monophosphorylated state that can stimulate subsequent ribonuclease cleavage. This Psychrobacter arcticus (strain DSM 17307 / VKM B-2377 / 273-4) protein is RNA pyrophosphohydrolase.